Consider the following 98-residue polypeptide: NADH-ubiquinone oxidoreductase chain 4L (98 aa).

3 helical membrane-spanning segments follow: residues 1 to 21 (MALIYTNTLLAFTISLLGLLL), 29 to 49 (SLLCLEGMMLSMFVMVAVMIL), and 61 to 81 (IVLLVFAACEAALGLSLLVMV).

It belongs to the complex I subunit 4L family. As to quaternary structure, core subunit of respiratory chain NADH dehydrogenase (Complex I) which is composed of 45 different subunits.

The protein resides in the mitochondrion inner membrane. It carries out the reaction a ubiquinone + NADH + 5 H(+)(in) = a ubiquinol + NAD(+) + 4 H(+)(out). Functionally, core subunit of the mitochondrial membrane respiratory chain NADH dehydrogenase (Complex I) which catalyzes electron transfer from NADH through the respiratory chain, using ubiquinone as an electron acceptor. Part of the enzyme membrane arm which is embedded in the lipid bilayer and involved in proton translocation. The chain is NADH-ubiquinone oxidoreductase chain 4L (MT-ND4L) from Rhinolophus monoceros (Formosan lesser horseshoe bat).